The primary structure comprises 926 residues: MLRAQRPRLARLRACLSRGLHHKPVMALRREDVNAWERRAPLAPKHIKGITKLGYKVLIQPSNRRAIHDKEYVRAGGILQEDITEACLILGVKRPPEEKLMSKKTYAFFSHTIKAQEANMNLLDEVLKQEIRLIDYEKMVDHRGSRIVAFGQWAGVAGMINILHGMGLRLLALGHHTPFMHLGMAHNYRNSSQAVQAVRDAGYEISLGLMPKSIGPLTFVFTGTGNVSKGAQEVFNELPCEYVEPHELREVSKTGDLRKVYGTVLSRHHHLVRKTDGVYDPVEYEKYPERYTSRFNTDIAPYTTCLINGIYWEQNTPRLLTRQDAQSLLVPVKSSVVPVEGCPELPHKLVAICDISADTGGSIDFMTECTTIERPFCMYDADQQIIHDSVEGSGILMCSIDNLPAQLPIEATEYFGDMLYPYVEEMLLSDASQPLESQNFSPVVRDAVITSNGLLTDKYKYIQKLRESRERIQFLSMSTKKKVLVLGSGYVSGPVLEYLSRDNNIEITLGSDMTNQMQQLSKKYNINPVSLTVGKQEAKLQSLVESQDLVISLLPYVLHPVVAKACIESRVNMVTASYITPAMKELEKSVDDAGITVIGELGLDPGLDHMLAMETIDTAKELGATVESYVSYCGGLPAPEHSDNPLRYKFSWSPVGVLMNIMQPASYLLNGKVVNVTGGVSFLNSVTPMDYFPGLNLEGYPNRDSIKYAEIYGISSAHTLLRGTLRYKGYSKALNGFVKLGLINREAYPALRPEANPLTWKQLLCDLVGISRSSPCEKLKEVVFTKLGGDNTQLEAAEWLGLLGDEQVPQAESIVDAFSKHLVSKLSYGPEEKDMIVMRDSFGIRHPSGHLENKTIDLVVYGDFNGFSAMAKTVGLPTAMAAKMLLDGEIEAKGLMGPFTKEIYGPILERIKAEGIVFNTQSTIKL.

Residues 1 to 27 constitute a mitochondrion transit peptide; that stretch reads MLRAQRPRLARLRACLSRGLHHKPVMA. The interval 28-455 is lysine-ketoglutarate reductase; that stretch reads LRREDVNAWE…DAVITSNGLL (428 aa). 3 positions are modified to N6-acetyllysine: Lys-48, Lys-52, and Lys-56. Lys-93 is subject to N6-acetyllysine; alternate. Lys-93 bears the N6-succinyllysine; alternate mark. The residue at position 128 (Lys-128) is an N6-acetyllysine. An N6-acetyllysine; alternate modification is found at Lys-138. Lys-138 bears the N6-succinyllysine; alternate mark. N6-succinyllysine is present on Lys-274. N6-acetyllysine; alternate is present on Lys-286. Lys-286 carries the post-translational modification N6-succinyllysine; alternate. The residue at position 333 (Lys-333) is an N6-succinyllysine. Residue Lys-458 is modified to N6-acetyllysine; alternate. N6-succinyllysine; alternate is present on Lys-458. Residues 477-926 are saccharopine dehydrogenase; that stretch reads MSTKKKVLVL…VFNTQSTIKL (450 aa). Ser-488, Asp-512, and Gln-516 together coordinate NAD(+). An N6-acetyllysine; alternate mark is found at Lys-523 and Lys-535. Residues Lys-523 and Lys-535 each carry the N6-succinyllysine; alternate modification. 3 residues coordinate NAD(+): Leu-554, Ala-576, and Ser-577. 577–578 serves as a coordination point for L-saccharopine; the sequence is SY. Position 584 is an N6-acetyllysine; alternate (Lys-584). At Lys-584 the chain carries N6-succinyllysine; alternate. Residues Leu-603, Asp-604, and Pro-605 each contribute to the NAD(+) site. Asp-604 is an L-saccharopine binding site. Arg-703 contacts L-saccharopine. Residue Lys-707 is modified to N6-acetyllysine. 724–726 serves as a coordination point for L-saccharopine; sequence TLR. The residue at position 732 (Lys-732) is an N6-succinyllysine. At Lys-739 the chain carries N6-acetyllysine. The residue at position 761 (Lys-761) is an N6-acetyllysine; alternate. Residue Lys-761 is modified to N6-succinyllysine; alternate. N6-acetyllysine is present on residues Lys-778 and Lys-780.

This sequence in the N-terminal section; belongs to the AlaDH/PNT family. It in the C-terminal section; belongs to the saccharopine dehydrogenase family. In terms of assembly, homotetramer. Highly expressed in kidney and liver, very low expression is seen in heart, brain, spleen, lung, skeletal muscle and testis.

It localises to the mitochondrion. It carries out the reaction L-saccharopine + NADP(+) + H2O = L-lysine + 2-oxoglutarate + NADPH + H(+). It catalyses the reaction L-saccharopine + NAD(+) + H2O = (S)-2-amino-6-oxohexanoate + L-glutamate + NADH + H(+). Its pathway is amino-acid degradation; L-lysine degradation via saccharopine pathway; glutaryl-CoA from L-lysine: step 1/6. It participates in amino-acid degradation; L-lysine degradation via saccharopine pathway; glutaryl-CoA from L-lysine: step 2/6. Bifunctional enzyme that catalyzes the first two steps in lysine degradation. The polypeptide is Alpha-aminoadipic semialdehyde synthase, mitochondrial (Mus musculus (Mouse)).